A 371-amino-acid chain; its full sequence is MATLGCAPKDDGEGKDEGGSDRGDGDSKPKGKKEVEPHTRREADERAMRIPIPEVLQQRLADDCYYINRRRRLVRLPCQTNVGAILECYVRHFSASVLALGDRRPQPQRAAPERSVGLCREMADGLRITFDHALPLVLLYPQEQAQYEMVTSSTFFFPTEERASDAGRSQEAPWPGPSPPQPSESQAVAGPAAPKRRRAEAEATRAPRRSTRHSTHCHWQAEDRASPQAKRSVPKLFPHLQKTPVHSAAPSPIALTPGKEGSAMFAGFEGTTEEINEILSWKLVPDNYPPGHQPPPPSYIYGAQHLLRLFVKLPEILGKMSFSEKNLKALLKHLDLFLRFLAEYQADFFLESAYVSACEAHYSSKNPRTLC.

2 disordered regions span residues Met-1–Ala-47 and Glu-160–Lys-230. Positions Pro-8 to Ala-47 are enriched in basic and acidic residues. The region spanning Asp-44–Pro-367 is the MRG domain. Low complexity predominate over residues Ser-183 to Ala-193. Over residues Ala-206–His-216 the composition is skewed to basic residues.

It is found in the nucleus. Functionally, probable non-catalytic component of the MSL histone acetyltransferase complex, a multiprotein complex that mediates the majority of histone H4 acetylation at 'Lys-16' (H4K16ac), an epigenetic mark that prevents chromatin compaction. In Mus musculus (Mouse), this protein is MSL complex subunit 3B.